The primary structure comprises 1011 residues: Translation initiation factor IF-2 (1011 aa).

The segment covering 49 to 77 has biased composition (basic and acidic residues); it reads YIHEHGTEESPRRRSAGEDEFKPKIDLSK. 2 disordered regions span residues 49 to 152 and 187 to 407; these read YIHE…RFIT and AAPA…LSLS. Positions 93-104 are enriched in pro residues; sequence APPPPPPPPPRP. The segment covering 105 to 115 has biased composition (low complexity); it reads AVKAPSPVSQE. Over residues 116–126 the composition is skewed to pro residues; it reads PRPPAVPPAPQ. Low complexity-rich tracts occupy residues 187–212 and 228–242; these read AAPA…KAPV and TAKP…AATP. Pro residues-rich tracts occupy residues 243–252 and 276–290; these read APTPGRPLPG and SAPP…PPPQ. Over residues 316-329 the composition is skewed to gly residues; the sequence is GPGGGSGGPGGFQR. The span at 361–380 shows a compositional bias: low complexity; the sequence is LAPPGAPANKPAGRPAPARR. Residues 502-678 form the tr-type G domain; it reads VRPPVVTIMG…CLVADLGDLK (177 aa). A G1 region spans residues 511–518; the sequence is GHVDHGKT. Residue 511-518 coordinates GTP; that stretch reads GHVDHGKT. The segment at 536–540 is G2; that stretch reads GITQH. The interval 564 to 567 is G3; it reads DTPG. GTP contacts are provided by residues 564-568 and 618-621; these read DTPGH and NKID. Residues 618–621 form a G4 region; that stretch reads NKID. The G5 stretch occupies residues 654-656; sequence SAK.

It belongs to the TRAFAC class translation factor GTPase superfamily. Classic translation factor GTPase family. IF-2 subfamily.

It localises to the cytoplasm. Its function is as follows. One of the essential components for the initiation of protein synthesis. Protects formylmethionyl-tRNA from spontaneous hydrolysis and promotes its binding to the 30S ribosomal subunits. Also involved in the hydrolysis of GTP during the formation of the 70S ribosomal complex. In Koribacter versatilis (strain Ellin345), this protein is Translation initiation factor IF-2.